We begin with the raw amino-acid sequence, 714 residues long: Polyribonucleotide nucleotidyltransferase (714 aa).

The Mg(2+) site is built by aspartate 487 and aspartate 493. Residues 554–613 (PRIEVLQIPTDKIRDVIGTGGKVIREIVEKTGAKINIEDDGTVKVASANGESIRAAIKWI) enclose the KH domain. One can recognise an S1 motif domain in the interval 623 to 691 (GQIYDGTVVK…DRGKVRLSMK (69 aa)).

The protein belongs to the polyribonucleotide nucleotidyltransferase family. Mg(2+) is required as a cofactor.

It is found in the cytoplasm. It catalyses the reaction RNA(n+1) + phosphate = RNA(n) + a ribonucleoside 5'-diphosphate. Involved in mRNA degradation. Catalyzes the phosphorolysis of single-stranded polyribonucleotides processively in the 3'- to 5'-direction. This chain is Polyribonucleotide nucleotidyltransferase, found in Afipia carboxidovorans (strain ATCC 49405 / DSM 1227 / KCTC 32145 / OM5) (Oligotropha carboxidovorans).